The primary structure comprises 378 residues: Carbamoyl phosphate synthase small chain (378 aa).

The tract at residues 1–189 (MTKPAILALA…DSHPEIPAGE (189 aa)) is CPSase. L-glutamine contacts are provided by Ser47, Gly241, and Gly243. One can recognise a Glutamine amidotransferase type-1 domain in the interval 193 to 378 (HVVAYDYGVK…RFISAMAERR (186 aa)). Residue Cys269 is the Nucleophile of the active site. L-glutamine is bound by residues Leu270, Gln273, Asn311, Gly313, and Phe314. Active-site residues include His353 and Glu355.

The protein belongs to the CarA family. Composed of two chains; the small (or glutamine) chain promotes the hydrolysis of glutamine to ammonia, which is used by the large (or ammonia) chain to synthesize carbamoyl phosphate. Tetramer of heterodimers (alpha,beta)4.

It carries out the reaction hydrogencarbonate + L-glutamine + 2 ATP + H2O = carbamoyl phosphate + L-glutamate + 2 ADP + phosphate + 2 H(+). The catalysed reaction is L-glutamine + H2O = L-glutamate + NH4(+). It participates in amino-acid biosynthesis; L-arginine biosynthesis; carbamoyl phosphate from bicarbonate: step 1/1. Its pathway is pyrimidine metabolism; UMP biosynthesis via de novo pathway; (S)-dihydroorotate from bicarbonate: step 1/3. Small subunit of the glutamine-dependent carbamoyl phosphate synthetase (CPSase). CPSase catalyzes the formation of carbamoyl phosphate from the ammonia moiety of glutamine, carbonate, and phosphate donated by ATP, constituting the first step of 2 biosynthetic pathways, one leading to arginine and/or urea and the other to pyrimidine nucleotides. The small subunit (glutamine amidotransferase) binds and cleaves glutamine to supply the large subunit with the substrate ammonia. The sequence is that of Carbamoyl phosphate synthase small chain from Pseudomonas aeruginosa (strain ATCC 15692 / DSM 22644 / CIP 104116 / JCM 14847 / LMG 12228 / 1C / PRS 101 / PAO1).